Consider the following 139-residue polypeptide: Glucanase inhibitor protein 3 (139 aa).

One can recognise a Peptidase S1 domain in the interval 1 to 138 (VLTLEKPSKF…GIEWINSVIK (138 aa)). Cystine bridges form between Cys-61-Cys-73 and Cys-83-Cys-114.

The protein belongs to the peptidase S1 family.

It is found in the secreted. Its function is as follows. Secreted effector that suppresses host plant glucan elicitor-mediated defense responses. Targets host endoglucanases and inhibits the endoglucanase-mediated release of elicitor-active glucan oligosaccharides from P.sojae cell walls. In Phytophthora sojae (Soybean stem and root rot agent), this protein is Glucanase inhibitor protein 3.